Here is a 314-residue protein sequence, read N- to C-terminus: Carbamate kinase (314 aa).

This sequence belongs to the carbamate kinase family. In terms of assembly, homodimer.

It is found in the cytoplasm. The enzyme catalyses hydrogencarbonate + NH4(+) + ATP = carbamoyl phosphate + ADP + H2O + H(+). Its function is as follows. Carbamate kinase that plays a biosynthetic role in that it produces carbamoyl-phosphate. This chain is Carbamate kinase (cpkA), found in Pyrococcus furiosus (strain ATCC 43587 / DSM 3638 / JCM 8422 / Vc1).